We begin with the raw amino-acid sequence, 71 residues long: Prokaryotic ubiquitin-like protein Pup (71 aa).

A compositionally biased stretch (basic and acidic residues) spans 1 to 18 (MPEKDTGGQHRATRRTEE). The interval 1 to 36 (MPEKDTGGQHRATRRTEEHDETIDEATATSDVQERR) is disordered. An ARC ATPase binding region spans residues 27-65 (TATSDVQERREKLDADVDAILDEIDDVLEENAEEFVRSY). A coiled-coil region spans residues 30–59 (SDVQERREKLDADVDAILDEIDDVLEENAE). Residue glutamate 71 forms an Isoglutamyl lysine isopeptide (Glu-Lys) (interchain with K-? in acceptor proteins) linkage.

It belongs to the prokaryotic ubiquitin-like protein family. Strongly interacts with the proteasome-associated ATPase ARC through a hydrophobic interface; the interacting region of Pup lies in its C-terminal half. There is one Pup binding site per ARC hexamer ring.

The protein operates within protein degradation; proteasomal Pup-dependent pathway. In terms of biological role, protein modifier that is covalently attached to lysine residues of substrate proteins, thereby targeting them for proteasomal degradation. The tagging system is termed pupylation. The chain is Prokaryotic ubiquitin-like protein Pup from Acidothermus cellulolyticus (strain ATCC 43068 / DSM 8971 / 11B).